The primary structure comprises 886 residues: UPF0592 membrane protein C7D4.03c (886 aa).

Residues 87–112 (ILNEPYNESPSSSSSDSSSRSTSPFS) form a disordered region. Residues 95-112 (SPSSSSSDSSSRSTSPFS) show a composition bias toward low complexity. Transmembrane regions (helical) follow at residues 277-297 (FCASILVLSFFQLPLFADHFL), 374-394 (GGFFFEFLSCYHSFLALQFSF), and 400-420 (VIYFAPGYICLHAYLLELTIS).

This sequence belongs to the UPF0592 family.

Its subcellular location is the membrane. In Schizosaccharomyces pombe (strain 972 / ATCC 24843) (Fission yeast), this protein is UPF0592 membrane protein C7D4.03c.